We begin with the raw amino-acid sequence, 146 residues long: Hemoglobin subunit beta (146 aa).

The Globin domain maps to 2–146 (PFSAHEEKLI…VAAALSAEYH (145 aa)). Heme b is bound by residues H63 and H92.

This sequence belongs to the globin family. As to quaternary structure, heterotetramer of two alpha chains and two beta chains. As to expression, red blood cells.

Functionally, involved in oxygen transport from the lung to the various peripheral tissues. The polypeptide is Hemoglobin subunit beta (HBB) (Caiman crocodilus (Spectacled caiman)).